Here is a 207-residue protein sequence, read N- to C-terminus: Small ribosomal subunit protein uS4 (207 aa).

The disordered stretch occupies residues 31–54 (KCKLDTKPGQHGRTSGSRTSDYGN). Over residues 42–53 (GRTSGSRTSDYG) the composition is skewed to polar residues. Positions 97 to 158 (SRLDNVVYRM…KAKKQARITE (62 aa)) constitute an S4 RNA-binding domain.

It belongs to the universal ribosomal protein uS4 family. As to quaternary structure, part of the 30S ribosomal subunit. Contacts protein S5. The interaction surface between S4 and S5 is involved in control of translational fidelity.

Its function is as follows. One of the primary rRNA binding proteins, it binds directly to 16S rRNA where it nucleates assembly of the body of the 30S subunit. Functionally, with S5 and S12 plays an important role in translational accuracy. The protein is Small ribosomal subunit protein uS4 of Polynucleobacter asymbioticus (strain DSM 18221 / CIP 109841 / QLW-P1DMWA-1) (Polynucleobacter necessarius subsp. asymbioticus).